A 227-amino-acid polypeptide reads, in one-letter code: UPF0173 metal-dependent hydrolase Cmaq_1073 (227 aa).

Belongs to the UPF0173 family.

In Caldivirga maquilingensis (strain ATCC 700844 / DSM 13496 / JCM 10307 / IC-167), this protein is UPF0173 metal-dependent hydrolase Cmaq_1073.